The chain runs to 118 residues: Large ribosomal subunit protein bL20 (118 aa).

It belongs to the bacterial ribosomal protein bL20 family.

Binds directly to 23S ribosomal RNA and is necessary for the in vitro assembly process of the 50S ribosomal subunit. It is not involved in the protein synthesizing functions of that subunit. This Lactobacillus delbrueckii subsp. bulgaricus (strain ATCC BAA-365 / Lb-18) protein is Large ribosomal subunit protein bL20.